The following is a 132-amino-acid chain: Small ribosomal subunit protein uS8 (132 aa).

It belongs to the universal ribosomal protein uS8 family. Part of the 30S ribosomal subunit. Contacts proteins S5 and S12.

Functionally, one of the primary rRNA binding proteins, it binds directly to 16S rRNA central domain where it helps coordinate assembly of the platform of the 30S subunit. This chain is Small ribosomal subunit protein uS8, found in Rickettsia bellii (strain OSU 85-389).